A 331-amino-acid chain; its full sequence is DNA-directed RNA polymerase subunit alpha (331 aa).

The segment at 1 to 226 (MLIAQRPTLT…ELFGLARELN (226 aa)) is alpha N-terminal domain (alpha-NTD). The segment at 243-331 (LSSELSMPIE…SYDEDETTTN (89 aa)) is alpha C-terminal domain (alpha-CTD).

It belongs to the RNA polymerase alpha chain family. As to quaternary structure, homodimer. The RNAP catalytic core consists of 2 alpha, 1 beta, 1 beta' and 1 omega subunit. When a sigma factor is associated with the core the holoenzyme is formed, which can initiate transcription.

The catalysed reaction is RNA(n) + a ribonucleoside 5'-triphosphate = RNA(n+1) + diphosphate. Its function is as follows. DNA-dependent RNA polymerase catalyzes the transcription of DNA into RNA using the four ribonucleoside triphosphates as substrates. The protein is DNA-directed RNA polymerase subunit alpha of Clavibacter michiganensis subsp. michiganensis (strain NCPPB 382).